A 298-amino-acid polypeptide reads, in one-letter code: Short-chain dehydrogenase/reductase prx6 (298 aa).

Residues I27, D70, N97, Y174, K178, V208, and T210 each coordinate NADP(+). Y174 acts as the Proton acceptor in catalysis. The active-site Lowers pKa of active site Tyr is the K178.

Belongs to the short-chain dehydrogenases/reductases (SDR) family.

It participates in sesquiterpene biosynthesis. In terms of biological role, short-chain dehydrogenase/reductase; part of the gene cluster that mediates the biosynthesis of PR-toxin, a bicyclic sesquiterpene belonging to the eremophilane class and acting as a mycotoxin. The first step of the pathway is catalyzed by the aristolochene synthase which performs the cyclization of trans,trans-farnesyl diphosphate (FPP) to the bicyclic sesquiterpene aristolochene. Following the formation of aristolochene, the non-oxygenated aristolochene is converted to the trioxygenated intermediate eremofortin B, via 7-epi-neopetasone. This conversion appears to involve three enzymes, a hydroxysterol oxidase-like enzyme, the quinone-oxidase prx3 that forms the quinone-type-structure in the bicyclic nucleus of aristolochene with the C8-oxo group and the C-3 hydroxyl group, and the P450 monooxygenase prx9 that introduces the epoxide at the double bond between carbons 1 and 2. No monoxy or dioxy-intermediates have been reported to be released to the broth, so these three early oxidative reactions may be coupled together. Eremofortin B is further oxidized by another P450 monooxygenase, that introduces a second epoxide between carbons 7 and 11 prior to acetylation to eremofortin A by the acetyltransferase prx11. The second epoxidation may be performed by a second P450 monooxygenase. After the acetylation step, eremofortin A is converted to eremofortin C and then to PR-toxin. First the conversion of eremofortin A to eremofortin C proceeds by oxidation of the side chain of the molecule at C-12 and is catalyzed by the short-chain oxidoreductase prx1. The cytochrome P450 monooxygenase prx8 also plays a role in this step. The primary alcohol formed at C-12 is finally oxidized by the short-chain alcohol dehydrogenase prx4 that forms PR-toxin. This chain is Short-chain dehydrogenase/reductase prx6, found in Penicillium rubens (strain ATCC 28089 / DSM 1075 / NRRL 1951 / Wisconsin 54-1255) (Penicillium chrysogenum).